Consider the following 59-residue polypeptide: UPF0434 protein lpl1884 (59 aa).

The protein belongs to the UPF0434 family.

This is UPF0434 protein lpl1884 from Legionella pneumophila (strain Lens).